A 314-amino-acid chain; its full sequence is tRNA dimethylallyltransferase (314 aa).

An ATP-binding site is contributed by 8 to 15 (GPTGAGKS). Position 10 to 15 (10 to 15 (TGAGKS)) interacts with substrate.

It belongs to the IPP transferase family. Monomer. It depends on Mg(2+) as a cofactor.

The catalysed reaction is adenosine(37) in tRNA + dimethylallyl diphosphate = N(6)-dimethylallyladenosine(37) in tRNA + diphosphate. Its function is as follows. Catalyzes the transfer of a dimethylallyl group onto the adenine at position 37 in tRNAs that read codons beginning with uridine, leading to the formation of N6-(dimethylallyl)adenosine (i(6)A). This chain is tRNA dimethylallyltransferase, found in Mycobacterium tuberculosis (strain ATCC 25177 / H37Ra).